Consider the following 380-residue polypeptide: Cytochrome b (380 aa).

4 consecutive transmembrane segments (helical) span residues 33–53 (FGSL…FLAM), 77–98 (WLIR…YMHI), 113–133 (WNIG…GYVL), and 178–198 (FFAF…LHLL). Heme b contacts are provided by H83 and H97. Residues H182 and H196 each contribute to the heme b site. H201 serves as a coordination point for a ubiquinone. Transmembrane regions (helical) follow at residues 226-246 (YKDL…ALFA), 288-308 (LGGV…PILH), 320-340 (LTQF…WIGG), and 347-367 (FIII…VLAP).

It belongs to the cytochrome b family. The cytochrome bc1 complex contains 3 respiratory subunits (MT-CYB, CYC1 and UQCRFS1), 2 core proteins (UQCRC1 and UQCRC2) and probably 6 low-molecular weight proteins. The cofactor is heme b.

It localises to the mitochondrion inner membrane. Its function is as follows. Component of the ubiquinol-cytochrome c reductase complex (complex III or cytochrome b-c1 complex) that is part of the mitochondrial respiratory chain. The b-c1 complex mediates electron transfer from ubiquinol to cytochrome c. Contributes to the generation of a proton gradient across the mitochondrial membrane that is then used for ATP synthesis. This Salmo trutta (Brown trout) protein is Cytochrome b (mt-cyb).